The chain runs to 197 residues: Histone chaperone asf1b-B (197 aa).

This sequence belongs to the ASF1 family. Interacts with histone H3 and histone H4.

It localises to the nucleus. Functionally, histone chaperone that facilitates histone deposition and histone exchange and removal during nucleosome assembly and disassembly. This Danio rerio (Zebrafish) protein is Histone chaperone asf1b-B (asf1bb).